We begin with the raw amino-acid sequence, 132 residues long: Translation initiation factor 5A (132 aa).

Lysine 36 carries the post-translational modification Hypusine.

This sequence belongs to the eIF-5A family.

The protein resides in the cytoplasm. In terms of biological role, functions by promoting the formation of the first peptide bond. This Thermofilum pendens (strain DSM 2475 / Hrk 5) protein is Translation initiation factor 5A (eIF5A).